The chain runs to 338 residues: tRNA N6-adenosine threonylcarbamoyltransferase (338 aa).

Residues histidine 114 and histidine 118 each contribute to the Fe cation site. Substrate is bound by residues 136 to 140, aspartate 169, glycine 182, aspartate 186, and asparagine 275; that span reads LVSGG. Residue aspartate 301 participates in Fe cation binding.

The protein belongs to the KAE1 / TsaD family. Fe(2+) is required as a cofactor.

The protein localises to the cytoplasm. It carries out the reaction L-threonylcarbamoyladenylate + adenosine(37) in tRNA = N(6)-L-threonylcarbamoyladenosine(37) in tRNA + AMP + H(+). Required for the formation of a threonylcarbamoyl group on adenosine at position 37 (t(6)A37) in tRNAs that read codons beginning with adenine. Is involved in the transfer of the threonylcarbamoyl moiety of threonylcarbamoyl-AMP (TC-AMP) to the N6 group of A37, together with TsaE and TsaB. TsaD likely plays a direct catalytic role in this reaction. In Streptococcus equi subsp. zooepidemicus (strain MGCS10565), this protein is tRNA N6-adenosine threonylcarbamoyltransferase.